The primary structure comprises 186 residues: Putative 3-methyladenine DNA glycosylase (186 aa).

The protein belongs to the DNA glycosylase MPG family.

This chain is Putative 3-methyladenine DNA glycosylase, found in Borrelia garinii subsp. bavariensis (strain ATCC BAA-2496 / DSM 23469 / PBi) (Borreliella bavariensis).